Reading from the N-terminus, the 77-residue chain is Immune protein Tsi2 (77 aa).

As to quaternary structure, forms a heterotetramer with Tse2 consisting of two Tse2 dimers and two Tsi2 dimers. Formation of the complex inactivates Tse2 enzymatic activity.

Functionally, immunity protein that plays a role in preventing early activation of toxin Tse2. Binds to a large surface of Tse2 and thereby occludes the active site to specifically inhibits Tse2. This is Immune protein Tsi2 from Pseudomonas aeruginosa (strain ATCC 15692 / DSM 22644 / CIP 104116 / JCM 14847 / LMG 12228 / 1C / PRS 101 / PAO1).